The following is a 443-amino-acid chain: 3-isopropylmalate dehydratase large subunit (443 aa).

The [4Fe-4S] cluster site is built by C347, C407, and C410.

It belongs to the aconitase/IPM isomerase family. LeuC type 1 subfamily. In terms of assembly, heterodimer of LeuC and LeuD. Requires [4Fe-4S] cluster as cofactor.

The enzyme catalyses (2R,3S)-3-isopropylmalate = (2S)-2-isopropylmalate. The protein operates within amino-acid biosynthesis; L-leucine biosynthesis; L-leucine from 3-methyl-2-oxobutanoate: step 2/4. Functionally, catalyzes the isomerization between 2-isopropylmalate and 3-isopropylmalate, via the formation of 2-isopropylmaleate. This Buchnera aphidicola subsp. Uroleucon obscurum protein is 3-isopropylmalate dehydratase large subunit.